Here is a 264-residue protein sequence, read N- to C-terminus: Short chain dehydrogenase/reductase dmxR18 (264 aa).

The NADP(+) site is built by isoleucine 24, aspartate 70, asparagine 97, and arginine 130. Active-site proton donor residues include serine 146 and serine 147. 3 residues coordinate NADP(+): tyrosine 161, lysine 165, and threonine 196. Tyrosine 161 functions as the Proton acceptor in the catalytic mechanism. The Lowers pKa of active site Tyr role is filled by lysine 165.

The protein belongs to the short-chain dehydrogenases/reductases (SDR) family.

It carries out the reaction 3,8,9,10-tetrahydroxy-6-methyl-1,4-dihydroanthracen-1-one + NADPH + H(+) = (3R)-3,8,9,10-tetrahydroxy-6-methyl-1,2,3,4-tetrahydroanthracen-1-one + NADP(+). It participates in secondary metabolite biosynthesis. Its function is as follows. Short chain dehydrogenase/reductase; part of the gene cluster that mediates the biosynthesis of the dimeric xanthones cryptosporioptides. The pathway begins with the synthesis of atrochrysone thioester by the polyketide synthase dmx-nrPKS. The atrochrysone carboxyl ACP thioesterase dmxR1 then breaks the thioester bond and releases the atrochrysone carboxylic acid from dmx-nrPKS. Atrochrysone carboxylic acid is decarboxylated by the decarboxylase dmxR15, and oxidized by the anthrone oxygenase dmxR16 to yield emodin. Emodin is then reduced to emodin hydroquinone by the oxidoreductase dmxR7. A-ring reduction by the short chain dehydrogenase dmxR18, dehydration by the scytalone dehydratase-like protein dmxR17 and probable spontaneous re-oxidation, results in overall deoxygenation to chrysophanol. Baeyer-Villiger oxidation by the Baeyer-Villiger monooxygenase (BVMO) dmxR6 then yields monodictylactone in equilibrium with monodictyphenone. In the case of the cryptosporioptides biosynthesis, monodictylactone is reduced at C-12 to an alcohol (by the short chain dehydrogenases dmxR12 or dmxR8) and hydroxylated at C-5 by dmxR9, yielding the electron-rich aromatic which could eliminate H(2)O to form the ortho-quinonemethide, followed by tautomerisation to paraquinone and complete the formal reduction to produce the 10-methylgroup. Conjugate addition of C-4a-OH to the resulting paraquinone by the monooxygenase dmxR10 then gives cyclohexadienone, which is then reduced at C-5 by the short chain dehydrogenase dmxR3 to give the dihydroxanthone. The 6,7-epoxide in the cryptosporioptides could be introduced by the cytochrome P450 monooxygenase dmxL3. The highly reducing PKS dmxL2 manufactures butyrate, which is further carboxylated by dmxL1 to form ethylmalonate. It is not yet clear whether the carboxylation occurs while the butyrate is attached to the ACP of dmxL2, but this unusual fungal metabolite could then be esterified to O-5 by the O-acetyltransferase dmxR13. Finally, dimerization performed by dmxR5 gives the observed dimers cryptosporioptides A, B and C as the final products of the pathway. In Cryptosporiopsis sp. (strain 8999), this protein is Short chain dehydrogenase/reductase dmxR18.